The sequence spans 584 residues: tRNA-guanine(15) transglycosylase (584 aa).

Asp95 serves as the catalytic Nucleophile. Residues Asp130 and Gly196 each coordinate substrate. The Zn(2+) site is built by Cys279, Cys281, and Cys284. In terms of domain architecture, PUA spans 507-582 (RMRVVVSEEA…RAVKVRRGIS (76 aa)).

This sequence belongs to the archaeosine tRNA-ribosyltransferase family. Zn(2+) is required as a cofactor.

It catalyses the reaction guanosine(15) in tRNA + 7-cyano-7-deazaguanine = 7-cyano-7-carbaguanosine(15) in tRNA + guanine. It participates in tRNA modification; archaeosine-tRNA biosynthesis. In terms of biological role, exchanges the guanine residue with 7-cyano-7-deazaguanine (preQ0) at position 15 in the dihydrouridine loop (D-loop) of archaeal tRNAs. This Pyrococcus abyssi (strain GE5 / Orsay) protein is tRNA-guanine(15) transglycosylase.